Consider the following 1072-residue polypeptide: DNA-directed RNA polymerase subunit beta (1072 aa).

It belongs to the RNA polymerase beta chain family. In terms of assembly, in plastids the minimal PEP RNA polymerase catalytic core is composed of four subunits: alpha, beta, beta', and beta''. When a (nuclear-encoded) sigma factor is associated with the core the holoenzyme is formed, which can initiate transcription.

The protein resides in the plastid. Its subcellular location is the chloroplast. The catalysed reaction is RNA(n) + a ribonucleoside 5'-triphosphate = RNA(n+1) + diphosphate. Functionally, DNA-dependent RNA polymerase catalyzes the transcription of DNA into RNA using the four ribonucleoside triphosphates as substrates. In Olimarabidopsis pumila (Dwarf rocket), this protein is DNA-directed RNA polymerase subunit beta.